The following is a 318-amino-acid chain: Pantothenate kinase (318 aa).

96 to 103 (GSVAVGKS) provides a ligand contact to ATP.

Belongs to the prokaryotic pantothenate kinase family.

It localises to the cytoplasm. It carries out the reaction (R)-pantothenate + ATP = (R)-4'-phosphopantothenate + ADP + H(+). Its pathway is cofactor biosynthesis; coenzyme A biosynthesis; CoA from (R)-pantothenate: step 1/5. This is Pantothenate kinase from Bradyrhizobium diazoefficiens (strain JCM 10833 / BCRC 13528 / IAM 13628 / NBRC 14792 / USDA 110).